Consider the following 248-residue polypeptide: Small ribosomal subunit protein uS3 (248 aa).

The 69-residue stretch at 38 to 106 (VREYLVKTLD…QVALNILEVK (69 aa)) folds into the KH type-2 domain. The segment covering 213 to 230 (ESEINAPAERRGRGDRNG) has biased composition (basic and acidic residues). A disordered region spans residues 213–248 (ESEINAPAERRGRGDRNGRPRRGGQRRQRSEQKQEG).

Belongs to the universal ribosomal protein uS3 family. In terms of assembly, part of the 30S ribosomal subunit. Forms a tight complex with proteins S10 and S14.

Functionally, binds the lower part of the 30S subunit head. Binds mRNA in the 70S ribosome, positioning it for translation. The chain is Small ribosomal subunit protein uS3 from Corynebacterium diphtheriae (strain ATCC 700971 / NCTC 13129 / Biotype gravis).